The following is a 364-amino-acid chain: Methylthioribose-1-phosphate isomerase (364 aa).

Residues 53–55 (RGA), arginine 90, and glutamine 203 contribute to the substrate site. The active-site Proton donor is aspartate 244. Residue 254–255 (NK) participates in substrate binding.

The protein belongs to the eIF-2B alpha/beta/delta subunits family. MtnA subfamily.

It catalyses the reaction 5-(methylsulfanyl)-alpha-D-ribose 1-phosphate = 5-(methylsulfanyl)-D-ribulose 1-phosphate. It participates in amino-acid biosynthesis; L-methionine biosynthesis via salvage pathway; L-methionine from S-methyl-5-thio-alpha-D-ribose 1-phosphate: step 1/6. In terms of biological role, catalyzes the interconversion of methylthioribose-1-phosphate (MTR-1-P) into methylthioribulose-1-phosphate (MTRu-1-P). This is Methylthioribose-1-phosphate isomerase from Rhizobium meliloti (strain 1021) (Ensifer meliloti).